Here is a 149-residue protein sequence, read N- to C-terminus: 4-hydroxyphenylacetate 3-monooxygenase, reductase component (149 aa).

27–34 is a binding site for FAD; it reads ERGMTATA. S37 contacts NAD(+). Residues 48 to 50, 54 to 55, and H80 contribute to the FAD site; these read AVS and KL. NAD(+) contacts are provided by residues H116 and 137-140; that span reads YFQR.

The protein belongs to the non-flavoprotein flavin reductase family. HpaC subfamily. In terms of assembly, homodimer. 4-HPA 3-monooxygenase consists of a reductase component HpaC and an oxygenase component HpaB.

It catalyses the reaction a reduced flavin + NAD(+) = an oxidized flavin + NADH + 2 H(+). It participates in aromatic compound metabolism; 4-hydroxyphenylacetate degradation; pyruvate and succinate semialdehyde from 4-hydroxyphenylacetate: step 1/7. Functionally, catalyzes the reduction of free flavins (FMN, FAD and riboflavin) by NADH. Subsequently, the reduced flavins diffuse to the large HpaB component. It utilizes NADH, but not NADPH as an electron donor, and both FAD and FMN as electron acceptors. In Thermus thermophilus (strain ATCC 27634 / DSM 579 / HB8), this protein is 4-hydroxyphenylacetate 3-monooxygenase, reductase component.